The primary structure comprises 329 residues: 4-hydroxythreonine-4-phosphate dehydrogenase (329 aa).

Substrate contacts are provided by His136 and Thr137. Residues His166, His211, and His266 each coordinate a divalent metal cation. 3 residues coordinate substrate: Lys274, Asn283, and Arg292.

Belongs to the PdxA family. In terms of assembly, homodimer. Zn(2+) is required as a cofactor. It depends on Mg(2+) as a cofactor. Co(2+) serves as cofactor.

Its subcellular location is the cytoplasm. The enzyme catalyses 4-(phosphooxy)-L-threonine + NAD(+) = 3-amino-2-oxopropyl phosphate + CO2 + NADH. Its pathway is cofactor biosynthesis; pyridoxine 5'-phosphate biosynthesis; pyridoxine 5'-phosphate from D-erythrose 4-phosphate: step 4/5. Its function is as follows. Catalyzes the NAD(P)-dependent oxidation of 4-(phosphooxy)-L-threonine (HTP) into 2-amino-3-oxo-4-(phosphooxy)butyric acid which spontaneously decarboxylates to form 3-amino-2-oxopropyl phosphate (AHAP). This Escherichia coli O6:H1 (strain CFT073 / ATCC 700928 / UPEC) protein is 4-hydroxythreonine-4-phosphate dehydrogenase.